A 368-amino-acid polypeptide reads, in one-letter code: MNLDKLQQWLQDSNNDIAYISNPITISYFTGYSMDPHERIFALLVFKDANPFIFCPALNVEEAKNSEWNGDVFGYLDSEDPWELIADNVRKRTSDTHTWAIEKDDLSVAHYQYLRGEFPNASFTNDVSSFIERLRLYKTPEEIKKLQGAGAEADFAFKIGFDAIRTGVTERSIAGQIDYQLKIQKGVMHESFETIVQAGKNAANPHLGPTMNTVQPNELVLFDLGTMHDGYASDSSRTVAYGTPSDKQREIYEVDREAQQAAIEAAKPGITAEELDSVARDIITKAGYGEYFIHRLGHGIGKNVHEYPSIVQGNDLVLEEGMCFSIEPGIYIPGFAGVRIEDCGVVTKDGFKTFTHTDKDLKIIPIRD.

Residues D223, D234, H298, E327, and E341 each coordinate Mn(2+).

It belongs to the peptidase M24B family. Requires Mn(2+) as cofactor.

It localises to the cytoplasm. It catalyses the reaction Xaa-L-Pro dipeptide + H2O = an L-alpha-amino acid + L-proline. The protein is Xaa-Pro dipeptidase (pepQ) of Lactobacillus helveticus (Lactobacillus suntoryeus).